Reading from the N-terminus, the 114-residue chain is Beta-microseminoprotein (114 aa).

The first 20 residues, M1–A20, serve as a signal peptide directing secretion. 5 disulfide bridges follow: C22/C70, C38/C62, C57/C93, C60/C69, and C84/C107.

The protein belongs to the beta-microseminoprotein family. In terms of assembly, homodimer; Interacts with PI16.

The protein localises to the secreted. This is Beta-microseminoprotein (MSMB) from Papio anubis (Olive baboon).